The primary structure comprises 71 residues: Translation initiation factor IF-1 (71 aa).

Positions 1–71 constitute an S1-like domain; it reads MSKQEMLSFS…LTKGRITFRG (71 aa).

The protein belongs to the IF-1 family. In terms of assembly, component of the 30S ribosomal translation pre-initiation complex which assembles on the 30S ribosome in the order IF-2 and IF-3, IF-1 and N-formylmethionyl-tRNA(fMet); mRNA recruitment can occur at any time during PIC assembly.

It is found in the cytoplasm. Functionally, one of the essential components for the initiation of protein synthesis. Stabilizes the binding of IF-2 and IF-3 on the 30S subunit to which N-formylmethionyl-tRNA(fMet) subsequently binds. Helps modulate mRNA selection, yielding the 30S pre-initiation complex (PIC). Upon addition of the 50S ribosomal subunit IF-1, IF-2 and IF-3 are released leaving the mature 70S translation initiation complex. This chain is Translation initiation factor IF-1, found in Pelagibacter ubique (strain HTCC1062).